Here is a 250-residue protein sequence, read N- to C-terminus: Coproheme decarboxylase (250 aa).

Residues Arg131, 145–149, His172, and Gln185 contribute to the Fe-coproporphyrin III site; that span reads YPMNK. Residue Tyr145 is part of the active site.

This sequence belongs to the ChdC family. Type 1 subfamily. Fe-coproporphyrin III serves as cofactor.

The enzyme catalyses Fe-coproporphyrin III + 2 H2O2 + 2 H(+) = heme b + 2 CO2 + 4 H2O. It carries out the reaction Fe-coproporphyrin III + H2O2 + H(+) = harderoheme III + CO2 + 2 H2O. It catalyses the reaction harderoheme III + H2O2 + H(+) = heme b + CO2 + 2 H2O. The protein operates within porphyrin-containing compound metabolism; protoheme biosynthesis. Involved in coproporphyrin-dependent heme b biosynthesis. Catalyzes the decarboxylation of Fe-coproporphyrin III (coproheme) to heme b (protoheme IX), the last step of the pathway. The reaction occurs in a stepwise manner with a three-propionate intermediate. The polypeptide is Coproheme decarboxylase (Staphylococcus aureus (strain bovine RF122 / ET3-1)).